We begin with the raw amino-acid sequence, 440 residues long: Chromosome partition protein MukF (440 aa).

The interval 208 to 236 (LSETSGTLRELQDTLEAAGDKLQANLLRI) is leucine-zipper.

This sequence belongs to the MukF family. In terms of assembly, interacts, and probably forms a ternary complex, with MukE and MukB via its C-terminal region. The complex formation is stimulated by calcium or magnesium. It is required for an interaction between MukE and MukB.

The protein localises to the cytoplasm. It localises to the nucleoid. Its function is as follows. Involved in chromosome condensation, segregation and cell cycle progression. May participate in facilitating chromosome segregation by condensation DNA from both sides of a centrally located replisome during cell division. Not required for mini-F plasmid partitioning. Probably acts via its interaction with MukB and MukE. Overexpression results in anucleate cells. It has a calcium binding activity. The protein is Chromosome partition protein MukF of Escherichia coli O9:H4 (strain HS).